The following is a 212-amino-acid chain: Regulatory protein RecX (212 aa).

Belongs to the RecX family.

The protein localises to the cytoplasm. Functionally, modulates RecA activity. The chain is Regulatory protein RecX from Clostridium perfringens (strain SM101 / Type A).